Consider the following 792-residue polypeptide: Endonuclease MutS2 (792 aa).

334 to 341 (GPNTGGKT) lines the ATP pocket. The region spanning 717 to 792 (IDLRGMMLSE…ENGVTVVELK (76 aa)) is the Smr domain.

Belongs to the DNA mismatch repair MutS family. MutS2 subfamily. Homodimer. Binds to stalled ribosomes, contacting rRNA.

In terms of biological role, endonuclease that is involved in the suppression of homologous recombination and thus may have a key role in the control of bacterial genetic diversity. Functionally, acts as a ribosome collision sensor, splitting the ribosome into its 2 subunits. Detects stalled/collided 70S ribosomes which it binds and splits by an ATP-hydrolysis driven conformational change. Acts upstream of the ribosome quality control system (RQC), a ribosome-associated complex that mediates the extraction of incompletely synthesized nascent chains from stalled ribosomes and their subsequent degradation. Probably generates substrates for RQC. The polypeptide is Endonuclease MutS2 (Ruminiclostridium cellulolyticum (strain ATCC 35319 / DSM 5812 / JCM 6584 / H10) (Clostridium cellulolyticum)).